Reading from the N-terminus, the 320-residue chain is Bifunctional phosphoglucose/phosphomannose isomerase (320 aa).

One can recognise an SIS domain in the interval 20-153; the sequence is IAKDLTPYKG…NLLGVDKDEL (134 aa). D-fructose 6-phosphate is bound by residues G37, S38, S80, S82, T85, and R132. E204 (proton acceptor) is an active-site residue. H220 and K313 together coordinate D-fructose 6-phosphate. The active-site Proton donor is the H220. Residue K313 is the Proton acceptor of the active site.

The protein belongs to the PGI/PMI family. In terms of assembly, homodimer.

It carries out the reaction alpha-D-glucose 6-phosphate = beta-D-fructose 6-phosphate. The enzyme catalyses D-mannose 6-phosphate = D-fructose 6-phosphate. Dual specificity isomerase that catalyzes the isomerization of both glucose-6-phosphate and mannose-6-phosphate to fructose-6-phosphate. The protein is Bifunctional phosphoglucose/phosphomannose isomerase of Aquifex aeolicus (strain VF5).